Here is an 877-residue protein sequence, read N- to C-terminus: Phosphoenolpyruvate carboxylase (877 aa).

Active-site residues include histidine 138 and lysine 544.

This sequence belongs to the PEPCase type 1 family. The cofactor is Mg(2+).

It catalyses the reaction oxaloacetate + phosphate = phosphoenolpyruvate + hydrogencarbonate. In terms of biological role, forms oxaloacetate, a four-carbon dicarboxylic acid source for the tricarboxylic acid cycle. The protein is Phosphoenolpyruvate carboxylase of Vibrio vulnificus (strain YJ016).